The primary structure comprises 880 residues: Valine--tRNA ligase (880 aa).

The 'HIGH' region motif lies at 48–58 (PNVTGKLHLGH). The short motif at 524-528 (KMSKS) is the 'KMSKS' region element. Lysine 527 provides a ligand contact to ATP. Residues 808-879 (LAGLINIEEE…VKERIAQLRS (72 aa)) adopt a coiled-coil conformation.

It belongs to the class-I aminoacyl-tRNA synthetase family. ValS type 1 subfamily. In terms of assembly, monomer.

The protein resides in the cytoplasm. It carries out the reaction tRNA(Val) + L-valine + ATP = L-valyl-tRNA(Val) + AMP + diphosphate. Functionally, catalyzes the attachment of valine to tRNA(Val). As ValRS can inadvertently accommodate and process structurally similar amino acids such as threonine, to avoid such errors, it has a 'posttransfer' editing activity that hydrolyzes mischarged Thr-tRNA(Val) in a tRNA-dependent manner. The protein is Valine--tRNA ligase of Enterococcus faecalis (strain ATCC 700802 / V583).